Here is a 411-residue protein sequence, read N- to C-terminus: Dual-specificity RNA methyltransferase RlmN (411 aa).

The Proton acceptor role is filled by E125. The 250-residue stretch at 131-380 (EEGRGTLCIS…IRTPRGRDIL (250 aa)) folds into the Radical SAM core domain. A disulfide bond links C138 and C383. 3 residues coordinate [4Fe-4S] cluster: C145, C149, and C152. S-adenosyl-L-methionine contacts are provided by residues 209–210 (GE), S241, 263–265 (SLH), and N340. Residue C383 is the S-methylcysteine intermediate of the active site.

It belongs to the radical SAM superfamily. RlmN family. [4Fe-4S] cluster serves as cofactor.

It is found in the cytoplasm. It carries out the reaction adenosine(2503) in 23S rRNA + 2 reduced [2Fe-2S]-[ferredoxin] + 2 S-adenosyl-L-methionine = 2-methyladenosine(2503) in 23S rRNA + 5'-deoxyadenosine + L-methionine + 2 oxidized [2Fe-2S]-[ferredoxin] + S-adenosyl-L-homocysteine. The catalysed reaction is adenosine(37) in tRNA + 2 reduced [2Fe-2S]-[ferredoxin] + 2 S-adenosyl-L-methionine = 2-methyladenosine(37) in tRNA + 5'-deoxyadenosine + L-methionine + 2 oxidized [2Fe-2S]-[ferredoxin] + S-adenosyl-L-homocysteine. Functionally, specifically methylates position 2 of adenine 2503 in 23S rRNA and position 2 of adenine 37 in tRNAs. m2A2503 modification seems to play a crucial role in the proofreading step occurring at the peptidyl transferase center and thus would serve to optimize ribosomal fidelity. The sequence is that of Dual-specificity RNA methyltransferase RlmN from Brucella abortus (strain S19).